The chain runs to 374 residues: Wnt inhibitory factor 1 (374 aa).

The first 28 residues, 1-28, serve as a signal peptide directing secretion; the sequence is MSLTGYFAAPLCSIFLFILAHADAGQQE. In terms of domain architecture, WIF spans 33–172; it reads MWIDAHQARV…PQNAIFFKTC (140 aa). N-linked (GlcNAc...) asparagine glycosylation is present at asparagine 83. Disulfide bonds link cysteine 135/cysteine 172, cysteine 177/cysteine 187, cysteine 181/cysteine 193, cysteine 195/cysteine 204, cysteine 209/cysteine 219, cysteine 213/cysteine 225, and cysteine 227/cysteine 236. EGF-like domains lie at 173–205, 208–237, 237–269, 270–301, and 302–333; these read QQAK…PHCE, LCMP…INCD, DKVN…EQCE, TSKC…DLCS, and KPVC…RYCN. Asparagine 240 carries N-linked (GlcNAc...) asparagine glycosylation. 9 cysteine pairs are disulfide-bonded: cysteine 241-cysteine 251, cysteine 245-cysteine 257, cysteine 259-cysteine 268, cysteine 273-cysteine 283, cysteine 277-cysteine 289, cysteine 291-cysteine 300, cysteine 305-cysteine 315, cysteine 309-cysteine 321, and cysteine 323-cysteine 332. A disordered region spans residues 343–374; it reads ALRPTGSRNRQHTPSPKRTEDRQALPESNYIW. A compositionally biased stretch (polar residues) spans 348 to 358; sequence GSRNRQHTPSP.

During somatogenesis, expressed predominantly in unsegmented paraxial presomitic mesoderm and, to a much lesser extent, in newly segmented somites.

Its subcellular location is the secreted. Its function is as follows. Binds to WNT proteins and inhibits their activities. May be involved in mesoderm segmentation. The polypeptide is Wnt inhibitory factor 1 (wif1) (Xenopus laevis (African clawed frog)).